The following is a 154-amino-acid chain: Crossover junction endodeoxyribonuclease RuvC (154 aa).

Active-site residues include Asp-7, Glu-67, and Asp-139. Residues Asp-7, Glu-67, and Asp-139 each contribute to the Mg(2+) site.

This sequence belongs to the RuvC family. In terms of assembly, homodimer which binds Holliday junction (HJ) DNA. The HJ becomes 2-fold symmetrical on binding to RuvC with unstacked arms; it has a different conformation from HJ DNA in complex with RuvA. In the full resolvosome a probable DNA-RuvA(4)-RuvB(12)-RuvC(2) complex forms which resolves the HJ. Requires Mg(2+) as cofactor.

The protein resides in the cytoplasm. It catalyses the reaction Endonucleolytic cleavage at a junction such as a reciprocal single-stranded crossover between two homologous DNA duplexes (Holliday junction).. In terms of biological role, the RuvA-RuvB-RuvC complex processes Holliday junction (HJ) DNA during genetic recombination and DNA repair. Endonuclease that resolves HJ intermediates. Cleaves cruciform DNA by making single-stranded nicks across the HJ at symmetrical positions within the homologous arms, yielding a 5'-phosphate and a 3'-hydroxyl group; requires a central core of homology in the junction. The consensus cleavage sequence is 5'-(A/T)TT(C/G)-3'. Cleavage occurs on the 3'-side of the TT dinucleotide at the point of strand exchange. HJ branch migration catalyzed by RuvA-RuvB allows RuvC to scan DNA until it finds its consensus sequence, where it cleaves and resolves the cruciform DNA. The sequence is that of Crossover junction endodeoxyribonuclease RuvC from Prochlorococcus marinus (strain MIT 9313).